Here is a 271-residue protein sequence, read N- to C-terminus: Phosphate import ATP-binding protein PstB 3 (271 aa).

An ABC transporter domain is found at 20–266 (LRVEGLGFYY…PQETQTRDYV (247 aa)). Residue 52–59 (GPSGCGKS) participates in ATP binding.

Belongs to the ABC transporter superfamily. Phosphate importer (TC 3.A.1.7) family. As to quaternary structure, the complex is composed of two ATP-binding proteins (PstB), two transmembrane proteins (PstC and PstA) and a solute-binding protein (PstS).

Its subcellular location is the cell inner membrane. The catalysed reaction is phosphate(out) + ATP + H2O = ADP + 2 phosphate(in) + H(+). Its function is as follows. Part of the ABC transporter complex PstSACB involved in phosphate import. Responsible for energy coupling to the transport system. This chain is Phosphate import ATP-binding protein PstB 3, found in Synechocystis sp. (strain ATCC 27184 / PCC 6803 / Kazusa).